The sequence spans 417 residues: MAMNFVTFNQDYSYLAVATSKGFRIFTTDPFAKSYETKEGHIAIIEMLFSTSLVALILSPRRLQITNTKRQSTICELTFPTTVLAVKLNRKRLVIVLEDQIYLYDIQTMKLLYTIQTSPNPNAICALSPSSDNCYLAYPLPQKAPPSSFTPPSHAPPGNTHVSPTSGEVLIFDSLKLEAINVIEAHRSPLACITLNSDGTLLATASDKGTIIRVFSVPDGHKLYQFRRGSMPSRIFSMSFNTTSTLLCVSSSTETIHLFKLSQQTSSSRDTSPSSSTPAGRDRAFSQSSLGHSPDRSDVSGEPDSSEFPARKHNGTLMGIIRRTSQNVGSTVAAKVGGYLPKGVSEMWEPARDFAWIKLPKPSQNAGGSGNNGPLRSVVAMSNNTPQVMVITSDGNFYVFSIDLSKGGEGTLTKQYS.

7 WD repeats span residues 1–36 (MAMN…KSYE), 69–114 (KRQS…LLYT), 139–182 (PLPQ…AINV), 185–225 (AHRS…KLYQ), 230–269 (SMPS…SSSR), 312–358 (KHNG…AWIK), and 370–410 (GNNG…GGEG). The short motif at 226 to 230 (FRRGS) is the L/FRRG motif element. Positions 261–314 (LSQQTSSSRDTSPSSSTPAGRDRAFSQSSLGHSPDRSDVSGEPDSSEFPARKHN) are disordered. Positions 262-278 (SQQTSSSRDTSPSSSTP) are enriched in low complexity.

It belongs to the WD repeat PROPPIN family. In terms of assembly, component of the PI(3,5)P2 regulatory complex.

It is found in the preautophagosomal structure membrane. Its subcellular location is the vacuole membrane. It localises to the endosome membrane. Its function is as follows. The PI(3,5)P2 regulatory complex regulates both the synthesis and turnover of phosphatidylinositol 3,5-bisphosphate (PtdIns(3,5)P2). Necessary for proper vacuole morphology. Plays an important role in osmotically-induced vacuole fragmentation. Required for cytoplasm to vacuole transport (Cvt) vesicle formation, pexophagy and starvation-induced autophagy. Involved in correct atg9 trafficking to the pre-autophagosomal structure. Might also be involved in premeiotic DNA replication. The chain is Autophagy-related protein 18 (atg18) from Aspergillus clavatus (strain ATCC 1007 / CBS 513.65 / DSM 816 / NCTC 3887 / NRRL 1 / QM 1276 / 107).